We begin with the raw amino-acid sequence, 199 residues long: MLKEIRPAIVLLLALTLLTGLAYPLAMTALAGVIFPKQAQGSLIEQDGQVIGSALIGQPFTEDKYFHGRPSATTAADPQDSSKTVPAPYNAANSAGSNLGPTNKALIDRVKDDVDKLKAENPSAAVPVDLVTTSASGLDPDISPEAALFQVPRVAKARGLSEERLRQLVSDHSKARLAGLLGEPRVNVLALNLALDAAK.

A helical transmembrane segment spans residues 7–27; sequence PAIVLLLALTLLTGLAYPLAM. Residues 67–86 are disordered; the sequence is HGRPSATTAADPQDSSKTVP. Residues 71 to 84 are compositionally biased toward polar residues; it reads SATTAADPQDSSKT.

It belongs to the KdpC family. As to quaternary structure, the system is composed of three essential subunits: KdpA, KdpB and KdpC.

It localises to the cell inner membrane. Its function is as follows. Part of the high-affinity ATP-driven potassium transport (or Kdp) system, which catalyzes the hydrolysis of ATP coupled with the electrogenic transport of potassium into the cytoplasm. This subunit acts as a catalytic chaperone that increases the ATP-binding affinity of the ATP-hydrolyzing subunit KdpB by the formation of a transient KdpB/KdpC/ATP ternary complex. This chain is Potassium-transporting ATPase KdpC subunit, found in Rhodopseudomonas palustris (strain BisB18).